We begin with the raw amino-acid sequence, 407 residues long: tRNA N6-adenosine threonylcarbamoyltransferase, mitochondrial (407 aa).

Residues 1–30 (MISIKGTGRFLLDNYRIWQRRAFNRPIQLR) constitute a mitochondrion transit peptide. A divalent metal cation-binding residues include H145 and H149. Residues 170-174 (LVSGG), D203, A217, E221, 328-329 (SN), and S360 contribute to the substrate site. D361 lines the a divalent metal cation pocket.

Belongs to the KAE1 / TsaD family. In terms of assembly, homodimer. The cofactor is a divalent metal cation.

The protein resides in the mitochondrion. The catalysed reaction is L-threonylcarbamoyladenylate + adenosine(37) in tRNA = N(6)-L-threonylcarbamoyladenosine(37) in tRNA + AMP + H(+). Required for the formation of a threonylcarbamoyl group on adenosine at position 37 (t(6)A37) in mitochondrial tRNAs that read codons beginning with adenine. Probably involved in the transfer of the threonylcarbamoyl moiety of threonylcarbamoyl-AMP (TC-AMP) to the N6 group of A37. Involved in mitochondrial genome maintenance. In Saccharomyces cerevisiae (strain ATCC 204508 / S288c) (Baker's yeast), this protein is tRNA N6-adenosine threonylcarbamoyltransferase, mitochondrial (QRI7).